A 255-amino-acid polypeptide reads, in one-letter code: DNA repair protein RecO (255 aa).

The protein belongs to the RecO family.

In terms of biological role, involved in DNA repair and RecF pathway recombination. This Listeria monocytogenes serotype 4b (strain CLIP80459) protein is DNA repair protein RecO.